Here is a 188-residue protein sequence, read N- to C-terminus: Large ribosomal subunit protein eL18 (188 aa).

A Glycyl lysine isopeptide (Lys-Gly) (interchain with G-Cter in SUMO2) cross-link involves residue Lys-119. Ser-130 is modified (phosphoserine). The tract at residues 151–188 (HFGKAPGTPHSHTKPYVRSKGRKFERARGRRASRGYKN) is disordered. The residue at position 158 (Thr-158) is a Phosphothreonine. 2 stretches are compositionally biased toward basic residues: residues 161–171 (SHTKPYVRSKG) and 178–188 (RGRRASRGYKN). Residue Lys-164 forms a Glycyl lysine isopeptide (Lys-Gly) (interchain with G-Cter in SUMO2) linkage.

Belongs to the eukaryotic ribosomal protein eL18 family. Component of the large ribosomal subunit.

The protein resides in the cytoplasm. Its subcellular location is the cytosol. The protein localises to the rough endoplasmic reticulum. Functionally, component of the large ribosomal subunit. The ribosome is a large ribonucleoprotein complex responsible for the synthesis of proteins in the cell. The polypeptide is Large ribosomal subunit protein eL18 (RPL18) (Canis lupus familiaris (Dog)).